The primary structure comprises 335 residues: Transcription factor IIIA (335 aa).

9 C2H2-type zinc fingers span residues 13 to 37 (YICS…LCKH), 43 to 67 (FPCT…SMTH), 73 to 98 (CKCD…QRAH), 105 to 129 (YECY…QYIH), 135 to 159 (FKCN…EKVH), 162 to 188 (YPCQ…AASH), 192 to 214 (TICD…KRTH), 221 to 246 (YKCP…LSFH), and 252 to 276 (FACG…ANTH). The segment covering 269–280 (LDRHANTHDPEK) has biased composition (basic and acidic residues). Residues 269–335 (LDRHANTHDP…ATAMQNLSIK (67 aa)) form a disordered region. Residues 281–292 (KKMKKPRPKKSL) show a composition bias toward basic residues.

It localises to the nucleus. Its function is as follows. Involved in ribosomal large subunit biogenesis. Interacts with the internal control region (ICR) of approximately 50 bases within the 5S RNA genes, is required for correct transcription of these genes by RNA polymerase III. Also binds the transcribed 5S RNA's. The sequence is that of Transcription factor IIIA (gtf3a) from Lithobates pipiens (Northern leopard frog).